The chain runs to 713 residues: Ribosomal RNA large subunit methyltransferase K/L (713 aa).

The THUMP domain maps to 43–154; it reads LAYRITLWTR…NGVITIAMNF (112 aa).

Belongs to the methyltransferase superfamily. RlmKL family.

The protein localises to the cytoplasm. The enzyme catalyses guanosine(2445) in 23S rRNA + S-adenosyl-L-methionine = N(2)-methylguanosine(2445) in 23S rRNA + S-adenosyl-L-homocysteine + H(+). The catalysed reaction is guanosine(2069) in 23S rRNA + S-adenosyl-L-methionine = N(2)-methylguanosine(2069) in 23S rRNA + S-adenosyl-L-homocysteine + H(+). Specifically methylates the guanine in position 2445 (m2G2445) and the guanine in position 2069 (m7G2069) of 23S rRNA. The protein is Ribosomal RNA large subunit methyltransferase K/L of Shewanella sp. (strain ANA-3).